Here is a 990-residue protein sequence, read N- to C-terminus: Presequence protease, mitochondrial (990 aa).

A mitochondrion-targeting transit peptide spans 1 to 25; sequence MLRLKSLKKPVQAVVRRFATTSAPT. His89 serves as a coordination point for Zn(2+). Glu92 functions as the Proton acceptor in the catalytic mechanism. His93 is a binding site for Zn(2+). The active site involves Glu165. Glu190 contacts Zn(2+).

This sequence belongs to the peptidase M16 family. PreP subfamily. As to quaternary structure, monomer and homodimer; homodimerization is induced by binding of the substrate. Zn(2+) serves as cofactor.

Its subcellular location is the mitochondrion intermembrane space. It localises to the mitochondrion matrix. Its function is as follows. Degrades mitochondrial transit peptides after their cleavage in the intermembrane space or in the matrix, and presequence peptides; clearance of these peptides is required to keep the presequence processing machinery running. Preferentially cleaves the N-terminal side of paired basic amino acid residues. Also degrades other unstructured peptides. May function as an ATP-dependent peptidase as opposed to a metalloendopeptidase. The sequence is that of Presequence protease, mitochondrial (CYM1) from Yarrowia lipolytica (strain CLIB 122 / E 150) (Yeast).